The primary structure comprises 627 residues: Protein zyg-11 homolog A (627 aa).

LRR repeat units lie at residues 123–146, 203–227, and 409–432; these read LPNL…LSCK, LPNL…SFLQ, and ITSI…LIMA.

This sequence belongs to the zyg-11 family.

Functionally, probably acts as a target recruitment subunit in an E3 ubiquitin ligase complex ZYGA-CUL2-elongin BC. The polypeptide is Protein zyg-11 homolog A (Zyg11a) (Mus musculus (Mouse)).